A 320-amino-acid chain; its full sequence is N-acetylneuraminate lyase (320 aa).

Aceneuramate-binding residues include T51 and T52. Y143 acts as the Proton donor in catalysis. The active-site Schiff-base intermediate with substrate is the K173. S175, G199, D201, E202, and S218 together coordinate aceneuramate.

It belongs to the DapA family. NanA subfamily. As to quaternary structure, homotetramer. Isoform 2 is expressed in placenta, liver, kidney, pancreas, spleen, thymus, ovary, small intestine and peripheral blood leukocyte.

Its subcellular location is the cytoplasm. It catalyses the reaction aceneuramate = aldehydo-N-acetyl-D-mannosamine + pyruvate. Its pathway is amino-sugar metabolism; N-acetylneuraminate degradation. Its function is as follows. Catalyzes the cleavage of N-acetylneuraminic acid (sialic acid) to form pyruvate and N-acetylmannosamine via a Schiff base intermediate. It prevents sialic acids from being recycled and returning to the cell surface. Involved in the N-glycolylneuraminic acid (Neu5Gc) degradation pathway. Although human is not able to catalyze formation of Neu5Gc due to the inactive CMAHP enzyme, Neu5Gc is present in food and must be degraded. In Homo sapiens (Human), this protein is N-acetylneuraminate lyase.